We begin with the raw amino-acid sequence, 115 residues long: U3-lycotoxin-Ls1k (115 aa).

An N-terminal signal peptide occupies residues 1–20 (MKSVLLFGVLLVTLFSYSSA). The propeptide occupies 21 to 44 (EMLDDFDQADEDELLSLIEKEEAR). Intrachain disulfides connect C48/C63, C55/C72, C62/C87, and C74/C85.

Belongs to the neurotoxin 19 (CSTX) family. 01 subfamily. In terms of tissue distribution, expressed by the venom gland.

The protein localises to the secreted. This chain is U3-lycotoxin-Ls1k, found in Lycosa singoriensis (Wolf spider).